The chain runs to 467 residues: tRNA-2-methylthio-N(6)-dimethylallyladenosine synthase (467 aa).

Positions 22 to 138 (GSYWITTFGC…LETLLNKVET (117 aa)) constitute an MTTase N-terminal domain. [4Fe-4S] cluster contacts are provided by Cys31, Cys67, Cys101, Cys173, Cys177, and Cys180. The Radical SAM core domain maps to 159–396 (RDSSICAWVN…NSLVEIKAKE (238 aa)). The region spanning 399–467 (VRYKDRVEEV…AFSLSGVIEN (69 aa)) is the TRAM domain.

This sequence belongs to the methylthiotransferase family. MiaB subfamily. Monomer. [4Fe-4S] cluster is required as a cofactor.

It is found in the cytoplasm. The catalysed reaction is N(6)-dimethylallyladenosine(37) in tRNA + (sulfur carrier)-SH + AH2 + 2 S-adenosyl-L-methionine = 2-methylsulfanyl-N(6)-dimethylallyladenosine(37) in tRNA + (sulfur carrier)-H + 5'-deoxyadenosine + L-methionine + A + S-adenosyl-L-homocysteine + 2 H(+). Its function is as follows. Catalyzes the methylthiolation of N6-(dimethylallyl)adenosine (i(6)A), leading to the formation of 2-methylthio-N6-(dimethylallyl)adenosine (ms(2)i(6)A) at position 37 in tRNAs that read codons beginning with uridine. This Prochlorococcus marinus (strain MIT 9211) protein is tRNA-2-methylthio-N(6)-dimethylallyladenosine synthase.